The chain runs to 204 residues: Calexcitin-1 (204 aa).

EF-hand domains lie at 25-61 (FLVK…VRDI), 75-110 (SLAA…TDAK), and 115-150 (WFKD…YGFD). Ca(2+)-binding residues include Asp39, Asn41, Ser43, Gln45, Asp50, Asp88, Asp90, Asp92, Glu99, Asp128, Ser130, Asp132, and Glu139.

The protein is Calexcitin-1 (cex-1) of Caenorhabditis elegans.